Consider the following 159-residue polypeptide: Nucleotide-binding protein PLES_47741 (159 aa).

The protein belongs to the YajQ family.

Nucleotide-binding protein. This chain is Nucleotide-binding protein PLES_47741, found in Pseudomonas aeruginosa (strain LESB58).